A 392-amino-acid chain; its full sequence is Queuine tRNA-ribosyltransferase (392 aa).

Aspartate 93 acts as the Proton acceptor in catalysis. Substrate is bound by residues 93 to 97 (DSGGY), aspartate 147, glutamine 189, and glycine 216. Residues 247–253 (GVGAPED) form an RNA binding region. Residue aspartate 266 is the Nucleophile of the active site. The segment at 271–275 (TRVAR) is RNA binding; important for wobble base 34 recognition. Positions 304, 306, 309, and 335 each coordinate Zn(2+).

Belongs to the queuine tRNA-ribosyltransferase family. As to quaternary structure, homodimer. Within each dimer, one monomer is responsible for RNA recognition and catalysis, while the other monomer binds to the replacement base PreQ1. It depends on Zn(2+) as a cofactor.

It carries out the reaction 7-aminomethyl-7-carbaguanine + guanosine(34) in tRNA = 7-aminomethyl-7-carbaguanosine(34) in tRNA + guanine. It functions in the pathway tRNA modification; tRNA-queuosine biosynthesis. In terms of biological role, catalyzes the base-exchange of a guanine (G) residue with the queuine precursor 7-aminomethyl-7-deazaguanine (PreQ1) at position 34 (anticodon wobble position) in tRNAs with GU(N) anticodons (tRNA-Asp, -Asn, -His and -Tyr). Catalysis occurs through a double-displacement mechanism. The nucleophile active site attacks the C1' of nucleotide 34 to detach the guanine base from the RNA, forming a covalent enzyme-RNA intermediate. The proton acceptor active site deprotonates the incoming PreQ1, allowing a nucleophilic attack on the C1' of the ribose to form the product. After dissociation, two additional enzymatic reactions on the tRNA convert PreQ1 to queuine (Q), resulting in the hypermodified nucleoside queuosine (7-(((4,5-cis-dihydroxy-2-cyclopenten-1-yl)amino)methyl)-7-deazaguanosine). The sequence is that of Queuine tRNA-ribosyltransferase from Dehalococcoides mccartyi (strain CBDB1).